Consider the following 417-residue polypeptide: Adenosylhomocysteinase (417 aa).

The substrate site is built by T53, D125, and E149. An NAD(+)-binding site is contributed by T150–T152. Positions 179 and 183 each coordinate substrate. NAD(+) is bound by residues N184, G213–G218, E236, N271, A292–H294, and N339.

This sequence belongs to the adenosylhomocysteinase family. Requires NAD(+) as cofactor.

It is found in the cytoplasm. The catalysed reaction is S-adenosyl-L-homocysteine + H2O = L-homocysteine + adenosine. It participates in amino-acid biosynthesis; L-homocysteine biosynthesis; L-homocysteine from S-adenosyl-L-homocysteine: step 1/1. Its function is as follows. May play a key role in the regulation of the intracellular concentration of adenosylhomocysteine. This is Adenosylhomocysteinase from Saccharolobus solfataricus (strain ATCC 35092 / DSM 1617 / JCM 11322 / P2) (Sulfolobus solfataricus).